A 182-amino-acid polypeptide reads, in one-letter code: Probable RNA 2'-phosphotransferase (182 aa).

The protein belongs to the KptA/TPT1 family.

Its function is as follows. Removes the 2'-phosphate from RNA via an intermediate in which the phosphate is ADP-ribosylated by NAD followed by a presumed transesterification to release the RNA and generate ADP-ribose 1''-2''-cyclic phosphate (APPR&gt;P). May function as an ADP-ribosylase. The chain is Probable RNA 2'-phosphotransferase from Acetivibrio thermocellus (strain ATCC 27405 / DSM 1237 / JCM 9322 / NBRC 103400 / NCIMB 10682 / NRRL B-4536 / VPI 7372) (Clostridium thermocellum).